We begin with the raw amino-acid sequence, 209 residues long: Uracil phosphoribosyltransferase (209 aa).

Residues arginine 79, arginine 104, and 131-139 (DPMLATGGS) each bind 5-phospho-alpha-D-ribose 1-diphosphate. Uracil is bound by residues isoleucine 194 and 199-201 (GDA). Position 200 (aspartate 200) interacts with 5-phospho-alpha-D-ribose 1-diphosphate.

Belongs to the UPRTase family. Mg(2+) serves as cofactor.

The enzyme catalyses UMP + diphosphate = 5-phospho-alpha-D-ribose 1-diphosphate + uracil. It participates in pyrimidine metabolism; UMP biosynthesis via salvage pathway; UMP from uracil: step 1/1. With respect to regulation, allosterically activated by GTP. Catalyzes the conversion of uracil and 5-phospho-alpha-D-ribose 1-diphosphate (PRPP) to UMP and diphosphate. In Natranaerobius thermophilus (strain ATCC BAA-1301 / DSM 18059 / JW/NM-WN-LF), this protein is Uracil phosphoribosyltransferase.